Here is a 390-residue protein sequence, read N- to C-terminus: GTPase Obg (390 aa).

The region spanning 1-159 is the Obg domain; sequence MKFVDEASVK…RELRLELLLL (159 aa). Positions 160-333 constitute an OBG-type G domain; that stretch reads ADVGMLGLPN…LCFKLGEFME (174 aa). GTP contacts are provided by residues 166 to 173, 191 to 195, 213 to 216, 283 to 286, and 314 to 316; these read GLPNAGKS, FTTLI, DIPG, NKVD, and SAV. S173 and T193 together coordinate Mg(2+).

It belongs to the TRAFAC class OBG-HflX-like GTPase superfamily. OBG GTPase family. In terms of assembly, monomer. The cofactor is Mg(2+).

Its subcellular location is the cytoplasm. Functionally, an essential GTPase which binds GTP, GDP and possibly (p)ppGpp with moderate affinity, with high nucleotide exchange rates and a fairly low GTP hydrolysis rate. Plays a role in control of the cell cycle, stress response, ribosome biogenesis and in those bacteria that undergo differentiation, in morphogenesis control. In Vibrio atlanticus (strain LGP32) (Vibrio splendidus (strain Mel32)), this protein is GTPase Obg.